The chain runs to 1042 residues: Sarcoplasmic/endoplasmic reticulum calcium ATPase 2 (1042 aa).

The Cytoplasmic segment spans residues 1–48; the sequence is MENAHTKTVEEVLGHFGVNESTGLSLEQVKKLKERWGSNELPAEEGKT. Phosphoserine is present on S38. The helical transmembrane segment at 49–69 threads the bilayer; the sequence is LLELVIEQFEDLLVRILLLAA. Residues 70–89 are Lumenal-facing; that stretch reads CISFVLAWFEEGEETITAFV. Residues 90–110 traverse the membrane as a helical segment; the sequence is EPFVILLILVANAIVGVWQER. Topologically, residues 111–253 are cytoplasmic; that stretch reads NAENAIEALK…QERTPLQQKL (143 aa). A helical membrane pass occupies residues 254–273; the sequence is DEFGEQLSKVISLICIAVWI. Topologically, residues 274 to 295 are lumenal; that stretch reads INIGHFNDPVHGGSWIRGAIYY. 2 positions are modified to 3'-nitrotyrosine: Y294 and Y295. Residues 296–313 form a helical membrane-spanning segment; the sequence is FKIAVALAVAAIPEGLPA. Ca(2+)-binding residues include V304, A305, I307, and E309. At 314–756 the chain is on the cytoplasmic side; sequence VITTCLALGT…EEGRAIYNNM (443 aa). The 4-aspartylphosphate intermediate role is filled by D351. 2 residues coordinate Mg(2+): D351 and T353. Position 353 (T353) interacts with ATP. T441 carries the post-translational modification Phosphothreonine. Residues E442, R489, and K514 each contribute to the ATP site. Phosphoserine is present on S531. ATP is bound at residue R559. The interval 575–594 is interaction with HAX1; sequence MNLEDSANFIKYETNLTFVG. S580 carries the phosphoserine modification. ATP contacts are provided by T624, G625, and D626. At S663 the chain carries Phosphoserine. ATP contacts are provided by R677 and K683. D702 is a Mg(2+) binding site. N705 lines the ATP pocket. Residues 757–776 form a helical membrane-spanning segment; that stretch reads KQFIRYLISSNVGEVVCIFL. Positions 767 and 770 each coordinate Ca(2+). Residues 777–786 lie on the Lumenal side of the membrane; the sequence is TAALGFPEAL. The chain crosses the membrane as a helical span at residues 787–807; sequence IPVQLLWVNLVTDGLPATALG. Positions 787–807 are interaction with PLN; sequence IPVQLLWVNLVTDGLPATALG. The interaction with TMEM64 and PDIA3 stretch occupies residues 788 to 1042; it reads PVQLLWVNLV…DTNFSDMFWS (255 aa). Ca(2+) is bound by residues N795, T798, and D799. The Cytoplasmic portion of the chain corresponds to 808–827; it reads FNPPDLDIMNKPPRNPKEPL. Residues 828 to 850 form a helical membrane-spanning segment; it reads ISGWLFFRYLAIGCYVGAATVGA. Over 851–896 the chain is Lumenal; it reads AAWWFIAADGGPRVTFYQLSHFLQCKEDNPDFEGVDCAVFESPYPM. A disulfide bridge links C875 with C887. The helical transmembrane segment at 897-916 threads the bilayer; the sequence is TMALSVLVTIEMCNALNSLS. E907 contributes to the Ca(2+) binding site. The Cytoplasmic segment spans residues 917 to 929; the sequence is ENQSLLRMPPWEN. The helical transmembrane segment at 930–948 threads the bilayer; the sequence is IWLVGSICLSMSLHFLILY. Positions 931–942 are interaction with PLN; sequence WLVGSICLSMSL. The Lumenal segment spans residues 949–963; that stretch reads VEPLPLIFQITPLNL. Residues 964–984 traverse the membrane as a helical segment; it reads TQWLMVLKISLPVILMDETLK. Topologically, residues 985-1042 are cytoplasmic; the sequence is FVARNYLEPGKECVQPATKSCSFSACTDGISWPFVLLIMPLVIWVYSTDTNFSDMFWS.

The protein belongs to the cation transport ATPase (P-type) (TC 3.A.3) family. Type IIA subfamily. In terms of assembly, interacts with sarcolipin (SLN); the interaction inhibits ATP2A2 Ca(2+) affinity. Interacts with phospholamban (PLN); the interaction inhibits ATP2A2 Ca(2+) affinity. Interacts with myoregulin (MRLN). Interacts with ARLN and ERLN; the interactions inhibit ATP2A2 Ca(2+) affinity. Interacts with STRIT1/DWORF; the interaction results in activation of ATP2A2. Interacts with the monomeric forms of SLN, PLN, ARLN, ERLN and STRI1/DWORF. Interacts with HAX1. Interacts with S100A8 and S100A9. Interacts with SLC35G1 and STIM1. Interacts with TMEM203. Interacts with TMEM64 and PDIA3. Interacts with TMX1. Interacts with TMX2. Interacts with VMP1; VMP1 competes with PLN and SLN to prevent them from forming an inhibitory complex with ATP2A2. Interacts with ULK1. Interacts with S100A1 in a Ca(2+)-dependent manner. Interacts with TUNAR. Interacts with FLVCR2; this interaction occurs in the absence of heme and promotes ATP2A2 proteasomal degradation; this complex is dissociated upon heme binding. Interacts with FNIP1. As to quaternary structure, interacts with TRAM2 (via C-terminus). Mg(2+) serves as cofactor. Nitrated under oxidative stress. Nitration on the two tyrosine residues inhibits catalytic activity. Post-translationally, serotonylated on Gln residues by TGM2 in response to hypoxia, leading to its inactivation. In terms of tissue distribution, detected in heart left ventricle (at protein level). Isoform 2 is highly expressed in heart and slow twitch skeletal muscle. Isoform 1 is widely expressed.

It localises to the endoplasmic reticulum membrane. The protein resides in the sarcoplasmic reticulum membrane. The catalysed reaction is Ca(2+)(in) + ATP + H2O = Ca(2+)(out) + ADP + phosphate + H(+). With respect to regulation, has different conformational states with differential Ca2+ affinity. The E1 conformational state (active form) shows high Ca(2+) affinity, while the E2 state exhibits low Ca(2+) affinity. Binding of ATP allosterically increases its affinity for subsequent binding of Ca2+. Reversibly inhibited by phospholamban (PLN) at low calcium concentrations. PLN inhibits ATP2A2 Ca(2+) affinity by disrupting its allosteric activation by ATP. Inhibited by sarcolipin (SLN) and myoregulin (MRLN). The inhibition is blocked by VMP1. Enhanced by STRIT1/DWORF; STRIT1 increases activity by displacing sarcolipin (SLN), phospholamban (PLN) and myoregulin (MRLN). Stabilizes SERCA2 in its E2 state. In terms of biological role, this magnesium-dependent enzyme catalyzes the hydrolysis of ATP coupled with the translocation of calcium from the cytosol to the sarcoplasmic reticulum lumen. Involved in autophagy in response to starvation. Upon interaction with VMP1 and activation, controls ER-isolation membrane contacts for autophagosome formation. Also modulates ER contacts with lipid droplets, mitochondria and endosomes. In coordination with FLVCR2 mediates heme-stimulated switching from mitochondrial ATP synthesis to thermogenesis. Functionally, involved in the regulation of the contraction/relaxation cycle. Acts as a regulator of TNFSF11-mediated Ca(2+) signaling pathways via its interaction with TMEM64 which is critical for the TNFSF11-induced CREB1 activation and mitochondrial ROS generation necessary for proper osteoclast generation. Association between TMEM64 and SERCA2 in the ER leads to cytosolic Ca(2+) spiking for activation of NFATC1 and production of mitochondrial ROS, thereby triggering Ca(2+) signaling cascades that promote osteoclast differentiation and activation. The sequence is that of Sarcoplasmic/endoplasmic reticulum calcium ATPase 2 (ATP2A2) from Sus scrofa (Pig).